A 1077-amino-acid chain; its full sequence is Endo-1,4-beta-xylanase Y (1077 aa).

Residues 1–26 form the signal peptide; that stretch reads MKNKRVLAKITALVVLLGVFFVLPSN. Positions 33–180 constitute a CBM-cenC 1 domain; sequence DYEVVHDTFE…IFDDVTITRK (148 aa). The GH10 domain maps to 189 to 538; that stretch reads YAANAVLKDM…KPAYNAVASI (350 aa). Catalysis depends on Glu337, which acts as the Proton donor. The active-site Nucleophile is the Glu460. Positions 543–563 are disordered; that stretch reads EWGDGNNPAGGGGGGKPEEPD. The CBM-cenC 2 domain maps to 565-714; it reads NGYYYHDTFE…YIDEAIGAVA (150 aa). The Dockerin domain occupies 728-796; it reads PPVLLGDVNG…LLRVIDKFPV (69 aa).

The protein belongs to the glycosyl hydrolase 10 (cellulase F) family.

The enzyme catalyses Endohydrolysis of (1-&gt;4)-beta-D-xylosidic linkages in xylans.. This is Endo-1,4-beta-xylanase Y (xynY) from Acetivibrio thermocellus (Hungateiclostridium thermocellum).